Reading from the N-terminus, the 70-residue chain is Sec-independent protein translocase protein TatA (70 aa).

Residues 1 to 21 form a helical membrane-spanning segment; sequence MAIGVNQLLIILVIIVLLFGA.

Belongs to the TatA/E family. As to quaternary structure, the Tat system comprises two distinct complexes: a TatABC complex, containing multiple copies of TatA, TatB and TatC subunits, and a separate TatA complex, containing only TatA subunits. Substrates initially bind to the TatABC complex, which probably triggers association of the separate TatA complex to form the active translocon.

Its subcellular location is the cell inner membrane. Its function is as follows. Part of the twin-arginine translocation (Tat) system that transports large folded proteins containing a characteristic twin-arginine motif in their signal peptide across membranes. TatA could form the protein-conducting channel of the Tat system. The chain is Sec-independent protein translocase protein TatA from Campylobacter curvus (strain 525.92).